A 329-amino-acid polypeptide reads, in one-letter code: Peroxidase 50 (329 aa).

A signal peptide spans 1 to 25 (MVVVNKTNLLLLLLSLCLTLDLSSA). 4 disulfides stabilise this stretch: Cys-36–Cys-119, Cys-69–Cys-74, Cys-125–Cys-325, and Cys-204–Cys-236. The active-site Proton acceptor is His-67. Asp-68, Val-71, Gly-73, Asp-75, and Ser-77 together coordinate Ca(2+). Pro-167 is a binding site for substrate. His-197 lines the heme b pocket. Position 198 (Thr-198) interacts with Ca(2+). A glycan (N-linked (GlcNAc...) asparagine) is linked at Asn-215. Ca(2+) is bound by residues Asp-249, Thr-252, and Asp-257.

The protein belongs to the peroxidase family. Classical plant (class III) peroxidase subfamily. Heme b serves as cofactor. It depends on Ca(2+) as a cofactor. Expressed in roots and leaves.

Its subcellular location is the secreted. The catalysed reaction is 2 a phenolic donor + H2O2 = 2 a phenolic radical donor + 2 H2O. Removal of H(2)O(2), oxidation of toxic reductants, biosynthesis and degradation of lignin, suberization, auxin catabolism, response to environmental stresses such as wounding, pathogen attack and oxidative stress. These functions might be dependent on each isozyme/isoform in each plant tissue. Its function is as follows. Exhibits a Ca(2+)-pectate binding affinity which could be interpreted in vivo as a specificity to interact with the pectic structure of the cell wall. The polypeptide is Peroxidase 50 (PER50) (Arabidopsis thaliana (Mouse-ear cress)).